Reading from the N-terminus, the 253-residue chain is uncharacterized protein (253 aa).

The signal sequence occupies residues 1–19 (MRYLKKVTIYISLLILVSG). Residue C20 is the site of N-palmitoyl cysteine attachment. C20 is lipidated: S-diacylglycerol cysteine.

This sequence belongs to the staphylococcal tandem lipoprotein family.

It localises to the cell membrane. This is an uncharacterized protein from Staphylococcus epidermidis (strain ATCC 35984 / DSM 28319 / BCRC 17069 / CCUG 31568 / BM 3577 / RP62A).